The following is a 482-amino-acid chain: Auxin transporter-like protein 4 (482 aa).

Over 1–59 the chain is Cytoplasmic; the sequence is MLSQNQAEEAIVTNMNETEQEGGSSLEEIAEDQSMFNFKSFLWHGGSVWDAWFSCASNQ. A helical membrane pass occupies residues 60–77; that stretch reads VAQVLLTLPYSFSQLGMV. At 78–79 the chain is on the extracellular side; it reads SG. Residues 80-100 traverse the membrane as a helical segment; the sequence is IVFQIFYGLIGSWTAYLISVL. Over 101-135 the chain is Cytoplasmic; it reads YVEYRARKEKENVNFKNHVIQWFEVLDGLLGRYWK. The chain crosses the membrane as a helical span at residues 136 to 156; that stretch reads ALGLAFNCTFLLFGSVIQLIA. The Extracellular segment spans residues 157–172; sequence CASNIYYINDKLDKRT. A helical transmembrane segment spans residues 173–193; it reads WTYIFGACCATTVFIPSFHNY. Over 194–196 the chain is Cytoplasmic; sequence RIW. Residues 197–217 traverse the membrane as a helical segment; it reads SFLGLGMTTYTAWYMAIAAIV. At 218–232 the chain is on the extracellular side; it reads NGQIENVVHSGPTKL. A helical membrane pass occupies residues 233 to 253; the sequence is VLYFTGATNILYTFGGHAVTV. Topologically, residues 254–266 are cytoplasmic; that stretch reads EIMHAMWKPQKFK. The helical transmembrane segment at 267-287 threads the bilayer; the sequence is YIYFLATLYVFTLTIPSAVAV. Residues 288-314 lie on the Extracellular side of the membrane; that stretch reads YWAFGDELLNHSNAFSLLPKNGFRDAA. Asn-297 is a glycosylation site (N-linked (GlcNAc...) asparagine). Residues 315 to 335 traverse the membrane as a helical segment; the sequence is VILMLIHQFITFGFACTPLYF. Over 336 to 356 the chain is Cytoplasmic; that stretch reads VWEKVIGMHDTKSICLRALVR. The chain crosses the membrane as a helical span at residues 357–377; that stretch reads LPVVIPIWFLAIIFPFFGPIN. A topological domain (extracellular) is located at residue Ser-378. The chain crosses the membrane as a helical span at residues 379 to 399; it reads AVGALLVTFTVYIIPALAHML. At 400 to 422 the chain is on the cytoplasmic side; that stretch reads TYRTASARKNAVEKPPSFLPSWT. The chain crosses the membrane as a helical span at residues 423–443; sequence AVYVLNAFIVVWVLVVGFGFG. At 444-482 the chain is on the extracellular side; the sequence is GWASMTNFIRQIDTFGLFAKCYQCKPPTPPQAPSPHARH.

This sequence belongs to the amino acid/polyamine transporter 2 family. Amino acid/auxin permease (AAAP) (TC 2.A.18.1) subfamily. As to expression, shoots and roots of nodulating plants, at low levels.

The protein localises to the cell membrane. Its function is as follows. Carrier protein involved in proton-driven auxin influx. Mediates the formation of auxin gradient from developing leaves (site of auxin biosynthesis) to tips by contributing to the loading of auxin in vascular tissues and facilitating acropetal (base to tip) auxin transport within inner tissues of the root apex, and basipetal (tip to base) auxin transport within outer tissues of the root apex. May be involved in lateral roots and nodules formation. In Medicago truncatula (Barrel medic), this protein is Auxin transporter-like protein 4 (LAX4).